A 177-amino-acid chain; its full sequence is O-acetyl-ADP-ribose deacetylase (177 aa).

The Macro domain maps to 1–175; it reads MKTRIHVVQG…LYERLLTQQG (175 aa). Residues 11–12, Asn25, 33–35, and 122–126 contribute to the substrate site; these read DI, GVD, and STGVY. Asp35 (proton acceptor) is an active-site residue.

This sequence belongs to the MacroD-type family. YmdB subfamily. In terms of assembly, homodimer. Interacts with RNase III.

It catalyses the reaction 3''-O-acetyl-ADP-D-ribose + H2O = ADP-D-ribose + acetate + H(+). The catalysed reaction is 2''-O-acetyl-ADP-D-ribose + H2O = ADP-D-ribose + acetate + H(+). In terms of biological role, deacetylates O-acetyl-ADP ribose to yield ADP-ribose and free acetate. Down-regulates ribonuclease 3 (RNase III) activity. Acts by interacting directly with the region of the ribonuclease that is required for dimerization/activation. This is O-acetyl-ADP-ribose deacetylase from Shigella dysenteriae serotype 1 (strain Sd197).